We begin with the raw amino-acid sequence, 291 residues long: Formamidopyrimidine-DNA glycosylase (291 aa).

P2 (schiff-base intermediate with DNA) is an active-site residue. The active-site Proton donor is E3. The Proton donor; for beta-elimination activity role is filled by K58. 3 residues coordinate DNA: H100, R123, and K166. The FPG-type zinc finger occupies S257–K291. R281 acts as the Proton donor; for delta-elimination activity in catalysis.

It belongs to the FPG family. In terms of assembly, monomer. Zn(2+) is required as a cofactor.

The catalysed reaction is Hydrolysis of DNA containing ring-opened 7-methylguanine residues, releasing 2,6-diamino-4-hydroxy-5-(N-methyl)formamidopyrimidine.. The enzyme catalyses 2'-deoxyribonucleotide-(2'-deoxyribose 5'-phosphate)-2'-deoxyribonucleotide-DNA = a 3'-end 2'-deoxyribonucleotide-(2,3-dehydro-2,3-deoxyribose 5'-phosphate)-DNA + a 5'-end 5'-phospho-2'-deoxyribonucleoside-DNA + H(+). Its function is as follows. Involved in base excision repair of DNA damaged by oxidation or by mutagenic agents. Acts as a DNA glycosylase that recognizes and removes damaged bases. Has a preference for oxidized purines, such as 7,8-dihydro-8-oxoguanine (8-oxoG). Has AP (apurinic/apyrimidinic) lyase activity and introduces nicks in the DNA strand. Cleaves the DNA backbone by beta-delta elimination to generate a single-strand break at the site of the removed base with both 3'- and 5'-phosphates. The sequence is that of Formamidopyrimidine-DNA glycosylase from Bartonella henselae (strain ATCC 49882 / DSM 28221 / CCUG 30454 / Houston 1) (Rochalimaea henselae).